The primary structure comprises 148 residues: Large-conductance mechanosensitive channel (148 aa).

The next 3 membrane-spanning stretches (helical) occupy residues 21–41 (IDLA…DSVV), 45–65 (IMPL…KFLV), and 92–112 (GNFL…FIIV).

It belongs to the MscL family. As to quaternary structure, homopentamer.

It is found in the cell inner membrane. Functionally, channel that opens in response to stretch forces in the membrane lipid bilayer. May participate in the regulation of osmotic pressure changes within the cell. The sequence is that of Large-conductance mechanosensitive channel from Bordetella petrii (strain ATCC BAA-461 / DSM 12804 / CCUG 43448).